A 320-amino-acid polypeptide reads, in one-letter code: Mitochondrial thiamine pyrophosphate carrier (320 aa).

Solcar repeat units lie at residues 13-106 (NTKF…LTEL), 116-202 (REFS…LKHL), and 214-309 (NENL…FCNV). The helical transmembrane segment at 19–39 (AVAGSVSGLVTRALISPFDVI) threads the bilayer. S51 is modified (phosphoserine). 4 consecutive transmembrane segments (helical) span residues 87–107 (ILSI…TELV), 122–142 (FVCG…VDVL), 173–193 (VFYK…GLQF), and 220–240 (LLCG…LDLF). The Substrate recognition signature appears at 241–246 (KKRLQV). A helical transmembrane segment spans residues 293-313 (ALSTGFMFFSYEFFCNVFHCM).

The protein belongs to the mitochondrial carrier (TC 2.A.29) family. Expressed in all tissues examined except for placenta. Highest levels in colon, kidney, lung, testis, spleen, and brain.

The protein resides in the mitochondrion membrane. The enzyme catalyses thiamine phosphate(out) + thiamine diphosphate(in) = thiamine phosphate(in) + thiamine diphosphate(out). In terms of biological role, mitochondrial transporter mediating uptake of thiamine diphosphate into mitochondria. It is not clear if the antiporter activity is affected by the membrane potential or by the proton electrochemical gradient. The chain is Mitochondrial thiamine pyrophosphate carrier from Homo sapiens (Human).